Consider the following 474-residue polypeptide: Shugoshin-1 (474 aa).

Disordered stretches follow at residues 1–53 (MTST…KPNA), 189–226 (VESQ…NQGS), 322–356 (NSKQ…RCSK), and 422–442 (VSME…RKSN). 2 stretches are compositionally biased toward polar residues: residues 12–22 (GSLNPPHSNPS) and 190–201 (ESQSAVSSNTVC). Residues 211-220 (KRMPQRRRSS) show a composition bias toward basic residues. Polar residues-rich tracts occupy residues 322 to 341 (NSKQ…NTVD) and 422 to 431 (VSMEQRTNQE).

The protein belongs to the shugoshin family. As to expression, highly expressed in tissues containing meiocytes. Expressed at much lower level in leaves and pollen-containing flowers.

The protein localises to the nucleus. Its subcellular location is the chromosome. It localises to the centromere. Functionally, plays a central role in chromosome cohesion during meiosis I by preventing premature dissociation of cohesin complex from centromeres after prophase, when most of cohesin complex dissociates from chromosomes arms. Required for maintenance of centromeric cohesion before prophase II and correct segregation of chromatids during meiosis II. Has apparently no function in mitosis. The chain is Shugoshin-1 from Zea mays (Maize).